The sequence spans 211 residues: Protein-methionine-sulfoxide reductase heme-binding subunit MsrQ (211 aa).

5 helical membrane passes run 8–28 (VIWL…WLVW), 54–74 (FLLA…PLLI), 82–102 (LWCF…ELGV), 116–136 (PYLT…FTST), and 153–173 (FVYL…KIIS).

Belongs to the MsrQ family. Heterodimer of a catalytic subunit (MsrP) and a heme-binding subunit (MsrQ). FMN serves as cofactor. The cofactor is heme b.

It localises to the cell inner membrane. Its function is as follows. Part of the MsrPQ system that repairs oxidized periplasmic proteins containing methionine sulfoxide residues (Met-O), using respiratory chain electrons. Thus protects these proteins from oxidative-stress damage caused by reactive species of oxygen and chlorine generated by the host defense mechanisms. MsrPQ is essential for the maintenance of envelope integrity under bleach stress, rescuing a wide series of structurally unrelated periplasmic proteins from methionine oxidation, including the primary periplasmic chaperone SurA and the lipoprotein Pal. MsrQ provides electrons for reduction to the reductase catalytic subunit MsrP, using the quinone pool of the respiratory chain. This chain is Protein-methionine-sulfoxide reductase heme-binding subunit MsrQ, found in Escherichia coli O6:K15:H31 (strain 536 / UPEC).